The primary structure comprises 240 residues: UDP-2,3-diacylglucosamine hydrolase (240 aa).

Mn(2+)-binding residues include Asp9, His11, Asp43, Asn81, and His116. 81–82 contributes to the substrate binding site; it reads NR. Substrate-binding residues include Asp124, Ser162, Lys166, Lys169, and His197. The Mn(2+) site is built by His197 and His199.

It belongs to the LpxH family. It depends on Mn(2+) as a cofactor.

The protein resides in the cell inner membrane. It carries out the reaction UDP-2-N,3-O-bis[(3R)-3-hydroxytetradecanoyl]-alpha-D-glucosamine + H2O = 2-N,3-O-bis[(3R)-3-hydroxytetradecanoyl]-alpha-D-glucosaminyl 1-phosphate + UMP + 2 H(+). It participates in glycolipid biosynthesis; lipid IV(A) biosynthesis; lipid IV(A) from (3R)-3-hydroxytetradecanoyl-[acyl-carrier-protein] and UDP-N-acetyl-alpha-D-glucosamine: step 4/6. In terms of biological role, hydrolyzes the pyrophosphate bond of UDP-2,3-diacylglucosamine to yield 2,3-diacylglucosamine 1-phosphate (lipid X) and UMP by catalyzing the attack of water at the alpha-P atom. Involved in the biosynthesis of lipid A, a phosphorylated glycolipid that anchors the lipopolysaccharide to the outer membrane of the cell. This chain is UDP-2,3-diacylglucosamine hydrolase, found in Neisseria gonorrhoeae (strain ATCC 700825 / FA 1090).